Consider the following 151-residue polypeptide: Large ribosomal subunit protein bL9 (151 aa).

Belongs to the bacterial ribosomal protein bL9 family.

Functionally, binds to the 23S rRNA. This is Large ribosomal subunit protein bL9 from Rhodococcus jostii (strain RHA1).